A 79-amino-acid chain; its full sequence is Metallothionein-like protein type 2 (79 aa).

This sequence belongs to the metallothionein superfamily. Type 15 family.

Functionally, metallothioneins have a high content of cysteine residues that bind various heavy metals. The sequence is that of Metallothionein-like protein type 2 (MT1) from Malus domestica (Apple).